Reading from the N-terminus, the 467-residue chain is MAAKLLLLLCLFSGLHARSRRVEEDDSEDSPSNQKWVLAPKSQDTDVTLILNKLLREYDKKLRPDIGIKPTVIDVDIYVNSIGPVSSINMEYQIDIFFAQTWTDSRLRFNSTMKILTLNSNMVGLIWIPDTIFRNSKTAEAHWITTPNQLLRIWNDGKILYTLRLTINAECQLQLHNFPMDAHACPLTFSSYGYPKEEMIYRWRKNSVEAADQKSWRLYQFDFMGLRNTTEIVTTSAGDYVVMTIYFELSRRMGYFTIQTYIPCILTVVLSWVSFWIKKDATPARTTLGITTVLTMTTLSTIARKSLPRVSYVTAMDLFVTVCFLFVFAALMEYATLNYYSSCRKPTIRKKKTSLLHPDSTRWIPDRISLQAPSNYSLLDMRPPPPVMITLNNSMYWQEFEDTCVYECLDGKDCQSFFCCYEECKSGSWRRGRIHIDVSELDSYSRVFFPTSFLLFNLVYWVGYLYL.

The N-terminal stretch at 1 to 17 (MAAKLLLLLCLFSGLHA) is a signal peptide. At 18-256 (RSRRVEEDDS…FELSRRMGYF (239 aa)) the chain is on the extracellular side. Asn-110 is a glycosylation site (N-linked (GlcNAc...) asparagine). A disulfide bridge links Cys-171 with Cys-185. An N-linked (GlcNAc...) asparagine glycan is attached at Asn-228. A helical membrane pass occupies residues 257-277 (TIQTYIPCILTVVLSWVSFWI). Residues 278–283 (KKDATP) are Cytoplasmic-facing. Residues 284-303 (ARTTLGITTVLTMTTLSTIA) form a helical membrane-spanning segment. Over 304–311 (RKSLPRVS) the chain is Extracellular. A helical transmembrane segment spans residues 312–332 (YVTAMDLFVTVCFLFVFAALM). Residues 333–446 (EYATLNYYSS…DVSELDSYSR (114 aa)) are Cytoplasmic-facing. The helical transmembrane segment at 447–467 (VFFPTSFLLFNLVYWVGYLYL) threads the bilayer.

The protein belongs to the ligand-gated ion channel (TC 1.A.9) family. Gamma-aminobutyric acid receptor (TC 1.A.9.5) subfamily. GABRG3 sub-subfamily. Heteropentamer, formed by a combination of alpha (GABRA1-6), beta (GABRB1-3), gamma (GABRG1-3), delta (GABRD), epsilon (GABRE), rho (GABRR1-3), pi (GABRP) and theta (GABRQ) chains, each subunit exhibiting distinct physiological and pharmacological properties. May be palmitoylated. As to expression, expressed in brain.

The protein localises to the postsynaptic cell membrane. The protein resides in the cell membrane. It carries out the reaction chloride(in) = chloride(out). Its activity is regulated as follows. Allosterically potentiated by alphaxalone. Allosterically inhibited by pregnenolone sulfate. Inhibited by zinc and lanthanum. Its function is as follows. Gamma subunit of the heteropentameric ligand-gated chloride channel gated by gamma-aminobutyric acid (GABA), a major inhibitory neurotransmitter in the brain. GABA-gated chloride channels, also named GABA(A) receptors (GABAAR), consist of five subunits arranged around a central pore and contain GABA active binding site(s) located at the alpha and beta subunit interface(s). When activated by GABA, GABAARs selectively allow the flow of chloride across the cell membrane down their electrochemical gradient. The protein is Gamma-aminobutyric acid receptor subunit gamma-3 of Rattus norvegicus (Rat).